A 320-amino-acid polypeptide reads, in one-letter code: Glucosaminate ammonia-lyase (320 aa).

Residue 36–43 (TGMQAGGQ) participates in FAD binding. Residues Cys-136 and Cys-139 are joined by a disulfide bond. 285–294 (DVADHVYRQA) is a binding site for FAD.

This sequence belongs to the class-II pyridine nucleotide-disulfide oxidoreductase family.

The enzyme catalyses 2-amino-2-deoxy-D-gluconate = 2-dehydro-3-deoxy-D-gluconate + NH4(+). Functionally, catalyzes the conversion of 2-amino-2-deoxy-D-gluconate (GlcNA) to 2-keto-3-deoxy-D-gluconic acid (KDGA) and ammonia. This Pseudomonas fluorescens protein is Glucosaminate ammonia-lyase.